The chain runs to 276 residues: MAKFRLSLVQFLVSPVKSDNLNKACKLIKEAAQKGAQIVALPECFNSPYGTKYFPEYAEKIPGESTELLSQVAKECGIYLIGGSIPEEDSGKFYNTCAVFGPDGTLLVKHRKIHLFDIDVPGKIRFQESETLSPGDSFSVFDTPYCKVGVGICYDMRFAELAQIYANKGCQLLVYPGAFNMTTGPAHWELLQRARALDNQVYVATASPARDEKASYVAWGHSTVVSPWGEVIAKAGFEETVISADIDLQYLAEIREQIPIRRQRRDNLYTVEEKKN.

The 245-residue stretch at 4–248 (FRLSLVQFLV…ETVISADIDL (245 aa)) folds into the CN hydrolase domain. The Proton acceptor role is filled by E43. K112 acts as the Proton donor in catalysis. The active-site Nucleophile is C153.

It belongs to the carbon-nitrogen hydrolase superfamily. NIT1/NIT2 family. Homodimer.

The protein resides in the cytoplasm. The catalysed reaction is 2-oxoglutaramate + H2O = 2-oxoglutarate + NH4(+). The enzyme catalyses 2-oxosuccinamate + H2O = oxaloacetate + NH4(+). Has omega-amidase activity. The role of omega-amidase is to remove potentially toxic intermediates by converting 2-oxoglutaramate and 2-oxosuccinamate to biologically useful 2-oxoglutarate and oxaloacetate, respectively. The chain is Omega-amidase NIT2-B (nit2b) from Xenopus laevis (African clawed frog).